A 157-amino-acid polypeptide reads, in one-letter code: Large ribosomal subunit protein eL24 (157 aa).

A disordered region spans residues 94–157 (RNQKPEVRKA…ISAPRVGGKR (64 aa)). Residues 96 to 117 (QKPEVRKAQREQAIRAAKESKK) are compositionally biased toward basic and acidic residues. The segment covering 123–140 (KKPAAASAKTSAKTAQKP) has biased composition (low complexity).

The protein belongs to the eukaryotic ribosomal protein eL24 family. As to quaternary structure, component of the large ribosomal subunit.

It is found in the cytoplasm. Its function is as follows. Component of the large ribosomal subunit. The ribosome is a large ribonucleoprotein complex responsible for the synthesis of proteins in the cell. This Gillichthys mirabilis (Long-jawed mudsucker) protein is Large ribosomal subunit protein eL24 (rpl24).